The chain runs to 415 residues: MKLSSCVLIFLLCNTFSSISAFRLSRSQPTERISGSAGDVLEDDPVGRLKVFVYELPSKYNKKILQKDPRCLNHMFAAEIYMQRFLLSSPVRTLNPEEADWFYVPVYTTCDLTPNGLPLPFKSPRMMRSAIQLIASNWPYWNRTEGADHFFVVPHDFGACFHYQEEKAIGRGILPLLQRATLVQTFGQRNHVCLKEGSITVPPYAPPQKMQSHLIPEKTPRSIFVYFRGLFYDVGNDPEGGYYARGARAAVWENFKDNPLFDISTEHPTTYYEDMQRAIFCLCPLGWAPWSPRLVEAVIFGCIPVIIADDIVLPFADAIPWEDIGVFVDEKDVPYLDTILTSIPPEVILRKQRLLANPSMKQAMLFPQPAQPGDAFHQVLNGLARKLPHERSVYLRPGEKLLNWTAGPVADLKPW.

Position 1 (Met1) is a topological domain, cytoplasmic. Residues 2–22 (KLSSCVLIFLLCNTFSSISAF) form a helical; Signal-anchor for type II membrane protein membrane-spanning segment. Residues 23–415 (RLSRSQPTER…AGPVADLKPW (393 aa)) lie on the Lumenal side of the membrane. 2 N-linked (GlcNAc...) asparagine glycosylation sites follow: Asn142 and Asn403.

This sequence belongs to the glycosyltransferase 47 family. Present in the xylem and phloem, and, to a lower extent, in interfascicular cells. Expressed in the root tip, shoot apical meristem (SAM), xylem cells of roots and stems, and in the vasculature of roots, cotyledons and leaves.

Its subcellular location is the golgi apparatus membrane. In terms of biological role, involved in the synthesis of the hemicellulose glucuronoxylan, a major component of secondary cell walls. Probably involved in the elongation of glucuronoxylan xylosyl backbone. This Arabidopsis thaliana (Mouse-ear cress) protein is Probable beta-1,4-xylosyltransferase IRX10L (IRX10L).